Reading from the N-terminus, the 637-residue chain is Threonine--tRNA ligase (637 aa).

Residues 1–65 form the TGS domain; that stretch reads MIAIQLPDGS…EADEALSIIT (65 aa). Residues 246–537 are catalytic; sequence DHRKLGRELD…LIEEHAGALP (292 aa). Cysteine 337, histidine 388, and histidine 514 together coordinate Zn(2+).

It belongs to the class-II aminoacyl-tRNA synthetase family. Homodimer. Requires Zn(2+) as cofactor.

It is found in the cytoplasm. The catalysed reaction is tRNA(Thr) + L-threonine + ATP = L-threonyl-tRNA(Thr) + AMP + diphosphate + H(+). Functionally, catalyzes the attachment of threonine to tRNA(Thr) in a two-step reaction: L-threonine is first activated by ATP to form Thr-AMP and then transferred to the acceptor end of tRNA(Thr). Also edits incorrectly charged L-seryl-tRNA(Thr). This Leptothrix cholodnii (strain ATCC 51168 / LMG 8142 / SP-6) (Leptothrix discophora (strain SP-6)) protein is Threonine--tRNA ligase.